The following is a 767-amino-acid chain: General transcription and DNA repair factor IIH helicase/translocase subunit XPB1 (767 aa).

Residues 1–51 are disordered; the sequence is MGNGERGRPNKKMKYGGKDDQKMKNIQNAEDYYDDADEDSRDGEGEEKKRD. The segment covering 31 to 41 has biased composition (acidic residues); it reads DYYDDADEDSR. Residues 42 to 51 are compositionally biased toward basic and acidic residues; that stretch reads DGEGEEKKRD. One can recognise a Helicase ATP-binding domain in the interval 293-455; it reads MFGNGRARSG…DLNFLIGPKL (163 aa). 306 to 313 serves as a coordination point for ATP; it reads LPCGAGKS. Residues 408 to 411 carry the DEVH box motif; the sequence is DEVH. Residues 510–676 form the Helicase C-terminal domain; it reads RACEFLIRFH…SLPPPDAGSS (167 aa). Residues 742–767 form a disordered region; it reads RHKSGQQFKKPKDPTKRHNLFKKRYV. The short motif at 750 to 766 is the Nuclear localization signal element; it reads KKPKDPTKRHNLFKKRY. Basic residues predominate over residues 758–767; it reads RHNLFKKRYV.

It belongs to the helicase family. RAD25/XPB subfamily. In terms of assembly, component of the 7-subunit TFIIH core complex composed of XPB, XPD, TFB1/GTF2H1, GTF2H2/P44, TFB4/GTF2H3, TFB2/GTF2H4 and TFB5/GTF2H5, which is active in NER. The core complex associates with the 3-subunit CDK-activating kinase (CAK) module composed of CYCH1/cyclin H1, CDKD and MAT1/At4g30820 to form the 10-subunit holoenzyme (holo-TFIIH) active in transcription. As to expression, expressed ubiquitously.

The protein localises to the nucleus. The catalysed reaction is Couples ATP hydrolysis with the unwinding of duplex DNA by translocating in the 3'-5' direction.. It catalyses the reaction ATP + H2O = ADP + phosphate + H(+). ATP-dependent 3'-5' DNA helicase/translocase; binds dsDNA rather than ssDNA, unzipping it in a translocase rather than classical helicase activity. Component of the general transcription and DNA repair factor IIH (TFIIH) core complex. When complexed to CDK-activating kinase (CAK), involved in RNA transcription by RNA polymerase II. The ATPase activity of XPB/ERCC3, but not its helicase activity, is required for DNA opening; it may wrap around the damaged DNA wedging it open, causing localized melting and twisting that allows XPD/ERCC2 helicase to anchor. The ATP-dependent helicase activity of XPB/ERCC3 may be required for promoter escape. Also involved in transcription-coupled nucleotide excision repair (NER) of damaged DNA. In NER, TFIIH acts by opening DNA around the lesion to allow the excision of the damaged oligonucleotide and its replacement by a new DNA fragment. The structure of the TFIIH transcription complex differs from the NER-TFIIH complex. Partially complements UV sensitivity of a yeast SSL2 mutation. Required during the early stages of development, including seed germination. The chain is General transcription and DNA repair factor IIH helicase/translocase subunit XPB1 (XPB1) from Arabidopsis thaliana (Mouse-ear cress).